Reading from the N-terminus, the 569-residue chain is Glutamine--tRNA ligase (569 aa).

The disordered stretch occupies residues 1–23 (MSKDPMSKPTPEPAAHSKAGPAV). The 'HIGH' region motif lies at 50-60 (PEPNGYLHIGH). Residues 51-53 (EPN) and 57-63 (HIGHAKS) contribute to the ATP site. L-glutamine is bound by residues aspartate 83 and tyrosine 228. ATP contacts are provided by residues threonine 247 and 277 to 278 (RL). Positions 284–288 (ITSKR) match the 'KMSKS' region motif.

This sequence belongs to the class-I aminoacyl-tRNA synthetase family. As to quaternary structure, monomer.

Its subcellular location is the cytoplasm. It carries out the reaction tRNA(Gln) + L-glutamine + ATP = L-glutaminyl-tRNA(Gln) + AMP + diphosphate. The protein is Glutamine--tRNA ligase of Pseudomonas syringae pv. tomato (strain ATCC BAA-871 / DC3000).